Consider the following 114-residue polypeptide: Fumarate reductase subunit D (114 aa).

Helical transmembrane passes span 25–45 (SGLA…FGII), 50–70 (IIAF…TIFP), and 94–114 (LIFY…VIAI).

This sequence belongs to the FrdD family. As to quaternary structure, part of an enzyme complex containing four subunits: a flavoprotein (FrdA), an iron-sulfur protein (FrdB), and two hydrophobic anchor proteins (FrdC and FrdD).

It is found in the cell inner membrane. Anchors the catalytic components of the fumarate reductase complex to the cell membrane, binds quinones. The chain is Fumarate reductase subunit D from Mannheimia succiniciproducens (strain KCTC 0769BP / MBEL55E).